A 193-amino-acid polypeptide reads, in one-letter code: Probable DNA-directed RNA polymerase subunit delta (193 aa).

Residues 14-83 enclose the HTH HARE-type domain; sequence LSMIEVARAI…GDNKWGLRSW (70 aa). Acidic residues-rich tracts occupy residues 119–133 and 143–193; these read EDAIDYNDDDPEDEN and YDND…ETND. Positions 119-193 are disordered; the sequence is EDAIDYNDDD…DDDYEDETND (75 aa).

Belongs to the RpoE family. In terms of assembly, RNAP is composed of a core of 2 alpha, a beta and a beta' subunits. The core is associated with a delta subunit and one of several sigma factors.

Participates in both the initiation and recycling phases of transcription. In the presence of the delta subunit, RNAP displays an increased specificity of transcription, a decreased affinity for nucleic acids, and an increased efficiency of RNA synthesis because of enhanced recycling. In Streptococcus thermophilus (strain CNRZ 1066), this protein is Probable DNA-directed RNA polymerase subunit delta.